The primary structure comprises 230 residues: Acyl-coenzyme A thioesterase THEM4 (230 aa).

A mitochondrion-targeting transit peptide spans 1 to 27; it reads MLRSCAMRLRTLGATPARRPEATRRLF. A phosphoserine mark is found at Ser-28 and Ser-29. N6-succinyllysine is present on residues Lys-46 and Lys-57. An N6-acetyllysine modification is found at Lys-65. N6-succinyllysine occurs at positions 89 and 98. Asp-152 (proton donor/acceptor) is an active-site residue. Residues Lys-175 and 196–197 each bind substrate; that span reads RK. Lys-197 carries the N6-succinyllysine modification.

Belongs to the THEM4/THEM5 thioesterase family. In terms of assembly, homodimer and homotetramer. Interacts with AKT1 in the cytosol. Phosphorylated.

It localises to the cell membrane. It is found in the cell projection. The protein localises to the ruffle membrane. Its subcellular location is the cytoplasm. The protein resides in the mitochondrion. It localises to the mitochondrion inner membrane. It is found in the mitochondrion intermembrane space. The catalysed reaction is hexadecanoyl-CoA + H2O = hexadecanoate + CoA + H(+). It catalyses the reaction octanoyl-CoA + H2O = octanoate + CoA + H(+). It carries out the reaction decanoyl-CoA + H2O = decanoate + CoA + H(+). The enzyme catalyses dodecanoyl-CoA + H2O = dodecanoate + CoA + H(+). The catalysed reaction is tetradecanoyl-CoA + H2O = tetradecanoate + CoA + H(+). It catalyses the reaction (9Z)-octadecenoyl-CoA + H2O = (9Z)-octadecenoate + CoA + H(+). It carries out the reaction (5Z,8Z,11Z,14Z)-eicosatetraenoyl-CoA + H2O = (5Z,8Z,11Z,14Z)-eicosatetraenoate + CoA + H(+). Has acyl-CoA thioesterase activity towards medium and long-chain (C14 to C18) fatty acyl-CoA substrates, and probably plays a role in mitochondrial fatty acid metabolism. Plays a role in the apoptotic process, possibly via its regulation of AKT1 activity. The polypeptide is Acyl-coenzyme A thioesterase THEM4 (Them4) (Rattus norvegicus (Rat)).